A 382-amino-acid chain; its full sequence is Intermediate transcription factor 3 large subunit (382 aa).

This sequence belongs to the orthopoxvirus OPG150 family. In terms of assembly, heterodimerizes with protein A8 to form the virus intermediate transcription factor (VITF)-3.

Functionally, acts with RNA polymerase to initiate transcription from intermediate gene promoters. This is Intermediate transcription factor 3 large subunit (OPG150) from Homo sapiens (Human).